Here is a 271-residue protein sequence, read N- to C-terminus: MTYLQESSRPAITVPKLQAMREAGEKIAMLTCYDASFAALLDRAGTDVLLIGDSLGNVLQGHTTTLPVSLDDIAYHTACVARVQPRALVVADLPFGTYGTPAEAFAHSVALMRAGAQMVKLEGGEWLADTIRFLVERSVPVCAHLGLTPQSVHAFGGFKVQGRTEAGAAQLLRDARAIEDAGAQLVVLEAVPTLVAAEVTHMLKIPTIGIGAGLDCSGQVLVLHDMLGIFPGKRPRFVKDFMQGQPSIQAAVEAYVSAVKECTFPGPEHSF.

Positions 53 and 92 each coordinate Mg(2+). 3-methyl-2-oxobutanoate contacts are provided by residues Asp-53–Ser-54, Asp-92, and Lys-120. Glu-122 contacts Mg(2+). Catalysis depends on Glu-189, which acts as the Proton acceptor.

This sequence belongs to the PanB family. In terms of assembly, homodecamer; pentamer of dimers. It depends on Mg(2+) as a cofactor.

Its subcellular location is the cytoplasm. The catalysed reaction is 3-methyl-2-oxobutanoate + (6R)-5,10-methylene-5,6,7,8-tetrahydrofolate + H2O = 2-dehydropantoate + (6S)-5,6,7,8-tetrahydrofolate. The protein operates within cofactor biosynthesis; (R)-pantothenate biosynthesis; (R)-pantoate from 3-methyl-2-oxobutanoate: step 1/2. In terms of biological role, catalyzes the reversible reaction in which hydroxymethyl group from 5,10-methylenetetrahydrofolate is transferred onto alpha-ketoisovalerate to form ketopantoate. This is 3-methyl-2-oxobutanoate hydroxymethyltransferase from Burkholderia vietnamiensis (strain G4 / LMG 22486) (Burkholderia cepacia (strain R1808)).